The sequence spans 270 residues: Glutamate 5-kinase (270 aa).

Lysine 17 contributes to the ATP binding site. Residues serine 57, aspartate 144, and asparagine 160 each contribute to the substrate site. ATP-binding positions include 180–181 (SD) and 222–228 (TGGMTSK).

Belongs to the glutamate 5-kinase family.

Its subcellular location is the cytoplasm. It catalyses the reaction L-glutamate + ATP = L-glutamyl 5-phosphate + ADP. It functions in the pathway amino-acid biosynthesis; L-proline biosynthesis; L-glutamate 5-semialdehyde from L-glutamate: step 1/2. Catalyzes the transfer of a phosphate group to glutamate to form L-glutamate 5-phosphate. This is Glutamate 5-kinase from Lactococcus lactis subsp. lactis (strain IL1403) (Streptococcus lactis).